A 399-amino-acid polypeptide reads, in one-letter code: Sister chromatid cohesion protein DCC1 (399 aa).

This sequence belongs to the DCC1 family. In terms of assembly, component of the CTF18-RFC complex which consists of CTF8, CTF18, DSCC1 and the RFC complex. Interacts with CTF8 and CTF18. Interacts with DDX11.

It localises to the nucleus. Loads PCNA onto primed templates regulating velocity, spacing and restart activity of replication forks. May couple DNA replication to sister chromatid cohesion through regulation of the acetylation of the cohesin subunit SMC3. The sequence is that of Sister chromatid cohesion protein DCC1 (DSCC1) from Mus musculus (Mouse).